A 312-amino-acid polypeptide reads, in one-letter code: Bifunctional pinoresinol-lariciresinol reductase (312 aa).

NADP(+) is bound by residues 10 to 16, arginine 35, and lysine 44; that span reads GGTGYIG. Catalysis depends on lysine 136, which acts as the Proton acceptor. Arginine 140 contacts NADP(+). Residue histidine 268 participates in substrate binding.

The protein belongs to the NmrA-type oxidoreductase family. Isoflavone reductase subfamily. In terms of assembly, dimer. As to expression, expressed in seed coats, but not in embryos, leaves, stems and roots.

In terms of biological role, reductase involved in lignan biosynthesis. Catalyzes the sequential conversion of pinoresinol into lariciresinol and of lariciresinol into secoisolariciresinol. Abstracts the 4R-hydride from the NADPH cofactor during catalysis. The sequence is that of Bifunctional pinoresinol-lariciresinol reductase from Linum usitatissimum (Flax).